Here is a 160-residue protein sequence, read N- to C-terminus: SsrA-binding protein (160 aa).

It belongs to the SmpB family.

It localises to the cytoplasm. Required for rescue of stalled ribosomes mediated by trans-translation. Binds to transfer-messenger RNA (tmRNA), required for stable association of tmRNA with ribosomes. tmRNA and SmpB together mimic tRNA shape, replacing the anticodon stem-loop with SmpB. tmRNA is encoded by the ssrA gene; the 2 termini fold to resemble tRNA(Ala) and it encodes a 'tag peptide', a short internal open reading frame. During trans-translation Ala-aminoacylated tmRNA acts like a tRNA, entering the A-site of stalled ribosomes, displacing the stalled mRNA. The ribosome then switches to translate the ORF on the tmRNA; the nascent peptide is terminated with the 'tag peptide' encoded by the tmRNA and targeted for degradation. The ribosome is freed to recommence translation, which seems to be the essential function of trans-translation. The sequence is that of SsrA-binding protein from Shewanella amazonensis (strain ATCC BAA-1098 / SB2B).